Consider the following 247-residue polypeptide: DNA repair protein RecO (247 aa).

The protein belongs to the RecO family.

Involved in DNA repair and RecF pathway recombination. This chain is DNA repair protein RecO, found in Alkalilimnicola ehrlichii (strain ATCC BAA-1101 / DSM 17681 / MLHE-1).